The primary structure comprises 131 residues: D-ribose pyranase (131 aa).

Catalysis depends on His20, which acts as the Proton donor. Substrate is bound by residues Asp28, His98, and Phe120 to Asn122.

It belongs to the RbsD / FucU family. RbsD subfamily. Homodecamer.

It is found in the cytoplasm. The enzyme catalyses beta-D-ribopyranose = beta-D-ribofuranose. It participates in carbohydrate metabolism; D-ribose degradation; D-ribose 5-phosphate from beta-D-ribopyranose: step 1/2. In terms of biological role, catalyzes the interconversion of beta-pyran and beta-furan forms of D-ribose. This Lactobacillus acidophilus (strain ATCC 700396 / NCK56 / N2 / NCFM) protein is D-ribose pyranase.